We begin with the raw amino-acid sequence, 335 residues long: Basic endochitinase B (335 aa).

Positions 1 to 33 (MPPQKENHRTLNKMKTNLFLFLIFSLLLSLSSA) are cleaved as a signal peptide. The 42-residue stretch at 34 to 75 (EQCGRQAGGALCPNGLCCSEFGWCGNTEPYCKQPGCQSQCTP) folds into the Chitin-binding type-1 domain. Cystine bridges form between C36–C51, C45–C57, C50–C64, C69–C73, C107–C169, C181–C189, and C288–C320. Residue E151 is the Proton donor of the active site. The propeptide at 329–335 (GLLEAAI) is removed in mature form. The short motif at 329-335 (GLLEAAI) is the Vacuolar targeting signal element.

The protein belongs to the glycosyl hydrolase 19 family. Chitinase class I subfamily. As to expression, high constitutive level in roots with lower levels in leaves and flowering shoots.

Its subcellular location is the vacuole. It catalyses the reaction Random endo-hydrolysis of N-acetyl-beta-D-glucosaminide (1-&gt;4)-beta-linkages in chitin and chitodextrins.. Defense against chitin-containing fungal pathogens. Seems particularly implicated in resistance to jasmonate-inducing pathogens such as A.brassicicola. In vitro antifungal activity against T.reesei, but not against A.solani, F.oxysporum, S.sclerotiorum, G.graminis and P.megasperma. The chain is Basic endochitinase B (CHI-B) from Arabidopsis thaliana (Mouse-ear cress).